The sequence spans 378 residues: MAGTDREKALDAALAQIERQFGKGAVMRMGDRTQEPIEVISTGSTALDIALGVGGLPRGRVVEIYGPESSGKTTLTLHAVANAQKAGGQVAFVDAEHALDPEYAKKLGVDIDNLILSQPDNGEQALEIVDMLVRSGALDLIVIDSVAALVPRAEIEGEMGDSHVGLQARLMSQALRKITSALNQSKTTAIFINQLREKIGVMFGSPETTTGGRALKFYASVRLDIRRIETLKDGTDAVGNRTRVKVVKNKVAPPFKQAEFDILYGQGISREGGLIDMGVEHGFVRKAGAWYTYEGDQLGQGKENARNFLKDNPDLADEIERKIKEKLGVGVRPDAAKAEAATDAAAAADTAGTDDAAKSVPAPASKTAKATKATAVKS.

Residue 66–73 coordinates ATP; the sequence is GPESSGKT. Residues 333-378 are disordered; sequence PDAAKAEAATDAAAAADTAGTDDAAKSVPAPASKTAKATKATAVKS. The span at 338–378 shows a compositional bias: low complexity; sequence AEAATDAAAAADTAGTDDAAKSVPAPASKTAKATKATAVKS.

It belongs to the RecA family.

It is found in the cytoplasm. Functionally, can catalyze the hydrolysis of ATP in the presence of single-stranded DNA, the ATP-dependent uptake of single-stranded DNA by duplex DNA, and the ATP-dependent hybridization of homologous single-stranded DNAs. It interacts with LexA causing its activation and leading to its autocatalytic cleavage. The polypeptide is Protein RecA (Streptomyces venezuelae (strain ATCC 10712 / CBS 650.69 / DSM 40230 / JCM 4526 / NBRC 13096 / PD 04745)).